Reading from the N-terminus, the 393-residue chain is Adaptive-response sensory kinase SasA (393 aa).

The Histidine kinase domain occupies 171 to 393 (MLAHDLRSPL…CFHFTLPVFR (223 aa)). Residue His-174 is modified to Phosphohistidine; by autocatalysis.

As to quaternary structure, homooligomerizes. Interacts with KaiC. Participates in the KaiABC clock complex, whose core is composed of a KaiC homohexamer, 6 KaiB and up to 6 KaiA dimers. SasA and KaiB(fs) compete to bind to KaiC.

The enzyme catalyses ATP + protein L-histidine = ADP + protein N-phospho-L-histidine.. Its function is as follows. Member of the two-component regulatory system SasA/RpaA involved in genome-wide circadian gene expression. One of several clock output pathways. Participates in the Kai clock protein complex, the main circadian regulator in cyanobacteria, via its interaction with KaiC. KaiC enhances the autophosphorylation activity of SasA, which then transfers its phosphate group to RpaA to activate it. In addition to its output function, recruits fold-shifted KaiB (KaiB(fs)) to KaiC to cooperatively form the KaiB(6):KaiC(6) complex (independent of SasA kinase activity). Required for robustness of the circadian rhythm of gene expression and is involved in clock output, also required for adaptation to light/dark cycles. The protein is Adaptive-response sensory kinase SasA of Gloeothece citriformis (strain PCC 7424) (Cyanothece sp. (strain PCC 7424)).